The chain runs to 102 residues: Colipase-like protein 2 (102 aa).

A signal peptide spans 1 to 23 (MAFTQALVTVLALLAGTLPHRHS). 5 disulfides stabilise this stretch: Cys36–Cys47, Cys42–Cys58, Cys46–Cys80, Cys68–Cys88, and Cys82–Cys99.

The protein belongs to the colipase family.

The protein resides in the secreted. The polypeptide is Colipase-like protein 2 (Clpsl2) (Mus musculus (Mouse)).